Consider the following 372-residue polypeptide: GRASP65 homolog protein 1 (372 aa).

Methionine 1 bears the N-acetylmethionine mark. PDZ GRASP-type domains follow at residues 66–183 (SGLR…WTPL) and 188–276 (FTYH…YGFL). The segment at 66 to 292 (SGLRIVWVDE…KHCPQQAQQQ (227 aa)) is GRASP. Serine 155 carries the phosphoserine modification. Positions 312–372 (VPSAFTAPPV…PPPQKQSSSD (61 aa)) are disordered.

Homodimer. Interacts with BUG1 (via C-terminus), probably forming a heterooligomer consisting of a GRH1 dimer and a BUG1 dimer. Interacts with COPII coat components SEC23, SEC24, SFB2 and SFB3. In terms of processing, N-terminal acetylation; by N-terminal acetyltransferase NatC.

The protein resides in the cytoplasm. It localises to the golgi apparatus. The protein localises to the cis-Golgi network membrane. In terms of biological role, involved in the spindle assembly checkpoint. Involved in ER to Golgi vesicle-mediated transport by either facilitating USO1-dependent and -independent tethering or increasing target accuracy of fusion events of COPII-coated vesicles. This Saccharomyces cerevisiae (strain ATCC 204508 / S288c) (Baker's yeast) protein is GRASP65 homolog protein 1 (GRH1).